A 268-amino-acid chain; its full sequence is Esterase GME11355 (268 aa).

Active-site charge relay system residues include S122, D212, and H240.

The protein belongs to the LovG family.

Its pathway is secondary metabolite biosynthesis. Esterase; part of the gene cluster that mediates the biosynthesis of dibenzodioxocinones such as pestalotiollide B, a novel class of inhibitors against cholesterol ester transfer protein (CEPT). The biosynthesis initiates from condensation of acetate and malonate units catalyzed by the non-reducing PKS pks8/GME11356. Pks8/GME11356 lacks a thioesterase (TE) domain, which is important to the cyclizing of the third ring of atrochrysone carboxylic acid, and the esterase GME11355 might play the role of TE and catalyzes the cyclization reaction of the C ring. The lactamase-like protein GME11357 (or other beta-lactamases in Pestalotiopsis microspora) probably hydrolyzes the thioester bond between the ACP of pks8/GME11356 and the intermediate to release atrochrysone carboxylic acid, which is spontaneously dehydrates to form endocrocin anthrone. Endocrocin anthrone is further converted to emodin via the endocrocin intermediate. Emodin is then oxidized by several enzymes such as the Baeyer-Villiger oxidase GME11358, the oxidoreductase GME11367, the short chain dehydrogenase/reductase GME11373, as well as by other oxidoreductases from the cluster, to modify the A and C rings and open the B ring, and finally yield monodictyphenone. The prenyltransferase GME11375 may catalyze the addition reaction between the C5 side chains and the carbon bone of dibenzodioxocinones. The remaining biochemical reactions to the final product dibenzodioxocinones should be methylation catalyzed by methyltransferase GME11366 and reduction and lactonization reaction catalyzed by a series of oxidordeuctases. The sequence is that of Esterase GME11355 from Pestalotiopsis microspora.